The sequence spans 349 residues: Core protein VP7 (349 aa).

Residue Asn-287 is glycosylated (N-linked (GlcNAc...) asparagine; by host).

This sequence belongs to the orbivirus VP7 family. In terms of assembly, homotrimer that assemble in a complex of 260 capsomers on an inner scaffold composed of VP3.

Its subcellular location is the virion. Functionally, the VP7 protein is one of the five proteins (with VP1, VP3, VP4, and VP6) which form the inner capsid of the virus. The protein is Core protein VP7 (Segment-7) of Antilocapra americana (Pronghorn).